The chain runs to 201 residues: Small ribosomal subunit protein uS4 (201 aa).

The tract at residues 20–46 is disordered; sequence SGTGKELSRRPYAPGQHGQDRRGSLSE. The region spanning 93 to 156 is the S4 RNA-binding domain; sequence RRLDNVVYRL…KDLQIVKEAL (64 aa).

It belongs to the universal ribosomal protein uS4 family. In terms of assembly, part of the 30S ribosomal subunit. Contacts protein S5. The interaction surface between S4 and S5 is involved in control of translational fidelity.

In terms of biological role, one of the primary rRNA binding proteins, it binds directly to 16S rRNA where it nucleates assembly of the body of the 30S subunit. Functionally, with S5 and S12 plays an important role in translational accuracy. This is Small ribosomal subunit protein uS4 from Ligilactobacillus salivarius (strain UCC118) (Lactobacillus salivarius).